A 437-amino-acid chain; its full sequence is Rhoptry apical surface protein 2 (437 aa).

A C2 domain is found at 45-179; the sequence is GCLGSLFFYL…PRINLSLHKL (135 aa). The PH domain occupies 230–338; the sequence is EGPLERLNAN…FIEKLRAYRE (109 aa). A disordered region spans residues 341-437; that stretch reads STRVPSQKGA…SVVGDEEPQT (97 aa). The span at 375-384 shows a compositional bias: basic residues; it reads RKSGGKKSRR.

In terms of assembly, interacts with RASP1. Interacts with RASP3.

The protein localises to the cytoplasmic vesicle. The protein resides in the secretory vesicle. It localises to the rhoptry membrane. Essential for tachyzoite invasion of host cells by controlling rhoptry secretion. Binds to phosphatidic acid (PA) and phosphatidylinositol 4,5-bisphosphate (PIP2) lipids and thus, likely contributes to the assembly of the machinery that docks or primes the rhoptry to the parasite cell membrane prior to the fusion with the host cell membrane. In Toxoplasma gondii (strain ATCC 50853 / GT1), this protein is Rhoptry apical surface protein 2.